The chain runs to 273 residues: Dermonecrotic toxin LspiSicTox-betaIE1i (273 aa).

Glu-25 and Asp-27 together coordinate Mg(2+). Catalysis depends on His-41, which acts as the Nucleophile. A disulfide bridge links Cys-45 with Cys-51. Asp-85 contributes to the Mg(2+) binding site.

It belongs to the arthropod phospholipase D family. Class I subfamily. Requires Mg(2+) as cofactor. As to expression, expressed by the venom gland.

Its subcellular location is the secreted. It carries out the reaction an N-(acyl)-sphingosylphosphocholine = an N-(acyl)-sphingosyl-1,3-cyclic phosphate + choline. The enzyme catalyses an N-(acyl)-sphingosylphosphoethanolamine = an N-(acyl)-sphingosyl-1,3-cyclic phosphate + ethanolamine. It catalyses the reaction a 1-acyl-sn-glycero-3-phosphocholine = a 1-acyl-sn-glycero-2,3-cyclic phosphate + choline. The catalysed reaction is a 1-acyl-sn-glycero-3-phosphoethanolamine = a 1-acyl-sn-glycero-2,3-cyclic phosphate + ethanolamine. Dermonecrotic toxins cleave the phosphodiester linkage between the phosphate and headgroup of certain phospholipids (sphingolipid and lysolipid substrates), forming an alcohol (often choline) and a cyclic phosphate. This toxin acts on sphingomyelin (SM). It may also act on ceramide phosphoethanolamine (CPE), lysophosphatidylcholine (LPC) and lysophosphatidylethanolamine (LPE), but not on lysophosphatidylserine (LPS), and lysophosphatidylglycerol (LPG). It acts by transphosphatidylation, releasing exclusively cyclic phosphate products as second products. Induces dermonecrosis, hemolysis, increased vascular permeability, edema, inflammatory response, and platelet aggregation. The sequence is that of Dermonecrotic toxin LspiSicTox-betaIE1i from Loxosceles spinulosa (Recluse spider).